We begin with the raw amino-acid sequence, 498 residues long: Envelop protein OPG153 (498 aa).

An intrachain disulfide couples Cys-43 to Cys-342. Positions 352 to 391 (ATDTGHHQDSKINIKDDDVDDDDYNPKPTPIPEPYPRPPF) are disordered. Residues 355–367 (TGHHQDSKINIKD) are compositionally biased toward basic and acidic residues. A compositionally biased stretch (pro residues) spans 378 to 390 (KPTPIPEPYPRPP).

It belongs to the orthopoxvirus OPG153 protein family. As to quaternary structure, interacts with proteins OPG094 and OPG143. Interacts with OPG154. Interacts with OPG152. Interacts with host laminin.

The protein resides in the virion membrane. Envelop protein that mediates acid-dependent endocytosis into host cells. Plays an important role in endocytic entry of the virus by acting as an acid-sensitive membrane fusion suppressor. Low pH in host endosomes triggers conformational changes to allow de-repression of viral fusion complex activity and membrane fusion within vesicles. Also plays a role in bridging the mature virion with structural protein OPG152. In Variola virus (isolate Human/India/Ind3/1967) (VARV), this protein is Envelop protein OPG153 (Protein OPG153).